Reading from the N-terminus, the 670-residue chain is Protein-glutamine gamma-glutamyltransferase 4 (670 aa).

2 N-linked (GlcNAc...) asparagine glycosylation sites follow: Asn-151 and Asn-219. Residue Cys-255 is part of the active site. N-linked (GlcNAc...) asparagine glycosylation occurs at Asn-288. Catalysis depends on residues His-314 and Asp-337. The Ca(2+) site is built by Asn-377, Asp-379, Glu-429, and Glu-434. N-linked (GlcNAc...) asparagine glycosylation is found at Asn-456 and Asn-491.

The protein belongs to the transglutaminase superfamily. Transglutaminase family. Homodimer. The cofactor is Ca(2+). Expressed in the coagulating gland and in the dorsal part of the prostate. Not expressed in the brain, heart, kidney, liver, lung, muscle, pancreas, spleen, stomach, testis and thymus.

The protein localises to the secreted. It catalyses the reaction L-glutaminyl-[protein] + L-lysyl-[protein] = [protein]-L-lysyl-N(6)-5-L-glutamyl-[protein] + NH4(+). Functionally, associated with the mammalian reproductive process. Plays an important role in the formation of the seminal coagulum through the cross-linking of specific proteins present in the seminal plasma. Transglutaminase is also required to stabilize the copulatory plug. In Mus musculus (Mouse), this protein is Protein-glutamine gamma-glutamyltransferase 4.